A 500-amino-acid polypeptide reads, in one-letter code: Lysine--tRNA ligase (500 aa).

Residues E410 and E417 each contribute to the Mg(2+) site.

This sequence belongs to the class-II aminoacyl-tRNA synthetase family. In terms of assembly, homodimer. Mg(2+) is required as a cofactor.

Its subcellular location is the cytoplasm. It carries out the reaction tRNA(Lys) + L-lysine + ATP = L-lysyl-tRNA(Lys) + AMP + diphosphate. This Shewanella oneidensis (strain ATCC 700550 / JCM 31522 / CIP 106686 / LMG 19005 / NCIMB 14063 / MR-1) protein is Lysine--tRNA ligase.